The sequence spans 226 residues: UPF0758 protein PputW619_0186 (226 aa).

An MPN domain is found at 102 to 224; that stretch reads ALESPSAVRR…PLSMVEQGWI (123 aa). Zn(2+)-binding residues include His173, His175, and Asp186. The JAMM motif motif lies at 173-186; it reads HNHPSGNSEPSQDD.

This sequence belongs to the UPF0758 family.

The polypeptide is UPF0758 protein PputW619_0186 (Pseudomonas putida (strain W619)).